A 468-amino-acid chain; its full sequence is MTKTLPKDFIFGGATAAYQAEGATHTDGKGPVAWDKYLEDNYWYTAEPASDFYNRYPVDLKLAEEYGVNGIRISIAWSRIFPTGYGQVNAKGVEFYHNLFAECHKRHVEPFVTLHHFDTPEALHSNGDFLNRENIEHFVDYAAFCFEEFPEVNYWTTFNEIGPIGDGQYLVGKFPPGIQYDLAKVFQSHHNMMVSHACAVKLYKEKGYKGEIGVVHALPTKYPLDPENPADVRAAELEDIIHNKFILDATYLGRYSAETMEGVNHILSVNGGSLDLREEDFTALEAAKDLNDFLGINYYMSDWMEAFDGETEIIHNGKGEKGSSKYQIKGIGRRVAPDYVSRTDWDWIIYPQGLYDQIMRVKKDYPNYKKIYITENGLGYKDEFVDNTVYDDGRIDYVKQHLEILSDAIADGANVKGYFIWSLMDVFSWSNGYEKRYGLFYVDFETQERYPKKSAHWYKKVAETQIID.

Gln19, His116, Asn159, Glu160, and Asn297 together coordinate D-galactose 6-phosphate. Residue Glu160 is the Proton donor of the active site. Glu375 functions as the Nucleophile in the catalytic mechanism. Residues Ser428, Trp429, Lys435, and Tyr437 each contribute to the D-galactose 6-phosphate site.

The protein belongs to the glycosyl hydrolase 1 family.

It catalyses the reaction a 6-phospho-beta-D-galactoside + H2O = D-galactose 6-phosphate + an alcohol. It participates in carbohydrate metabolism; lactose degradation; D-galactose 6-phosphate and beta-D-glucose from lactose 6-phosphate: step 1/1. In Streptococcus pneumoniae (strain JJA), this protein is 6-phospho-beta-galactosidase.